The following is a 208-amino-acid chain: MEPHDSSHVDSEFRYTLFPIVYSIIFVLGVIANGYVLWVFARLYPSKKFNEIKIFMVNLTMADMLFLITLPLWIVYYQNGGNWIFPKFLCNLAGCLFFINTYCSVAFLGVITYNRFQAVTRPIKTAQANTRKRGISLSLVIWVAIVGAASYFFILDSTNTVPNSAGSGNITRCFEHYEKGSVPVLIIHIFIVFSFFLVFLIILFCNLV.

Residues 1 to 16 (MEPHDSSHVDSEFRYT) lie on the Extracellular side of the membrane. The helical transmembrane segment at 17–38 (LFPIVYSIIFVLGVIANGYVLW) threads the bilayer. At 39–54 (VFARLYPSKKFNEIKI) the chain is on the cytoplasmic side. A helical membrane pass occupies residues 55–74 (FMVNLTMADMLFLITLPLWI). Residues 75–91 (VYYQNGGNWIFPKFLCN) lie on the Extracellular side of the membrane. A disulfide bridge links Cys90 with Cys173. The chain crosses the membrane as a helical span at residues 92–113 (LAGCLFFINTYCSVAFLGVITY). Residues 114-133 (NRFQAVTRPIKTAQANTRKR) lie on the Cytoplasmic side of the membrane. The helical transmembrane segment at 134 to 155 (GISLSLVIWVAIVGAASYFFIL) threads the bilayer. The Extracellular segment spans residues 156 to 184 (DSTNTVPNSAGSGNITRCFEHYEKGSVPV). Asn169 carries an N-linked (GlcNAc...) asparagine glycan. A helical transmembrane segment spans residues 185 to 205 (LIIHIFIVFSFFLVFLIILFC). At 206-208 (NLV) the chain is on the cytoplasmic side.

This sequence belongs to the G-protein coupled receptor 1 family. In terms of assembly, interacts with ARRB1.

The protein resides in the cell membrane. Receptor for platelet activating factor, a chemotactic phospholipid mediator that possesses potent inflammatory, smooth-muscle contractile and hypotensive activity. Seems to mediate its action via a G protein that activates a phosphatidylinositol-calcium second messenger system. This chain is Platelet-activating factor receptor (PTAFR), found in Macaca mulatta (Rhesus macaque).